We begin with the raw amino-acid sequence, 131 residues long: Protein Turandot M (131 aa).

A signal peptide spans 1–23; sequence MNPAIYLSCLVVFSLLLLGKVNA.

The protein belongs to the Turandot family.

Its subcellular location is the secreted. A humoral factor that may play a role in stress tolerance. Requires Mekk1 expression in the fat body to regulate response to septic injury and consequent immune response. The polypeptide is Protein Turandot M (Drosophila erecta (Fruit fly)).